We begin with the raw amino-acid sequence, 431 residues long: Serine hydroxymethyltransferase 2 (431 aa).

Residues Leu-131 and 135–137 (GHL) each bind (6S)-5,6,7,8-tetrahydrofolate. An N6-(pyridoxal phosphate)lysine modification is found at Lys-240. Glu-256 contributes to the (6S)-5,6,7,8-tetrahydrofolate binding site.

This sequence belongs to the SHMT family. As to quaternary structure, homodimer. Pyridoxal 5'-phosphate is required as a cofactor.

It localises to the cytoplasm. The enzyme catalyses (6R)-5,10-methylene-5,6,7,8-tetrahydrofolate + glycine + H2O = (6S)-5,6,7,8-tetrahydrofolate + L-serine. It functions in the pathway one-carbon metabolism; tetrahydrofolate interconversion. The protein operates within amino-acid biosynthesis; glycine biosynthesis; glycine from L-serine: step 1/1. Its function is as follows. Catalyzes the reversible interconversion of serine and glycine with tetrahydrofolate (THF) serving as the one-carbon carrier. This reaction serves as the major source of one-carbon groups required for the biosynthesis of purines, thymidylate, methionine, and other important biomolecules. Also exhibits THF-independent aldolase activity toward beta-hydroxyamino acids, producing glycine and aldehydes, via a retro-aldol mechanism. The chain is Serine hydroxymethyltransferase 2 from Vibrio vulnificus (strain YJ016).